Here is a 283-residue protein sequence, read N- to C-terminus: Bis(5'-nucleosyl)-tetraphosphatase, symmetrical (283 aa).

It belongs to the Ap4A hydrolase family.

It carries out the reaction P(1),P(4)-bis(5'-adenosyl) tetraphosphate + H2O = 2 ADP + 2 H(+). Hydrolyzes diadenosine 5',5'''-P1,P4-tetraphosphate to yield ADP. The polypeptide is Bis(5'-nucleosyl)-tetraphosphatase, symmetrical (Pseudomonas paraeruginosa (strain DSM 24068 / PA7) (Pseudomonas aeruginosa (strain PA7))).